The chain runs to 210 residues: Prolactin-2 (210 aa).

The first 23 residues, Met1–Ala23, serve as a signal peptide directing secretion. Intrachain disulfides connect Cys69-Cys183 and Cys200-Cys210.

The protein belongs to the somatotropin/prolactin family.

The protein localises to the secreted. This Oncorhynchus keta (Chum salmon) protein is Prolactin-2 (prl2).